Consider the following 145-residue polypeptide: Deoxyuridine 5'-triphosphate nucleotidohydrolase (145 aa).

Substrate-binding positions include 64-66 (RSG), Asn77, 81-83 (TID), and Met91.

The protein belongs to the dUTPase family. The cofactor is Mg(2+).

It carries out the reaction dUTP + H2O = dUMP + diphosphate + H(+). It participates in pyrimidine metabolism; dUMP biosynthesis; dUMP from dCTP (dUTP route): step 2/2. In terms of biological role, this enzyme is involved in nucleotide metabolism: it produces dUMP, the immediate precursor of thymidine nucleotides and it decreases the intracellular concentration of dUTP so that uracil cannot be incorporated into DNA. This chain is Deoxyuridine 5'-triphosphate nucleotidohydrolase, found in Leptospira interrogans serogroup Icterohaemorrhagiae serovar copenhageni (strain Fiocruz L1-130).